The chain runs to 68 residues: Large ribosomal subunit protein uL29 (68 aa).

Belongs to the universal ribosomal protein uL29 family.

This chain is Large ribosomal subunit protein uL29, found in Maricaulis maris (strain MCS10) (Caulobacter maris).